A 312-amino-acid chain; its full sequence is Nodulation protein D 2 (312 aa).

One can recognise an HTH lysR-type domain in the interval 6 to 63 (LDLNLLVALDALMTKRSVTAAARSINLSQPAMSAAIARLRTYFGDDLFTMRGRELIPT). A DNA-binding region (H-T-H motif) is located at residues 23–42 (VTAAARSINLSQPAMSAAIA).

The protein belongs to the LysR transcriptional regulatory family.

Functionally, represses the expression of the nodABCIJ-nolO-noeI operon. This Sinorhizobium fredii (strain NBRC 101917 / NGR234) protein is Nodulation protein D 2 (nodD2).